A 565-amino-acid chain; its full sequence is DNA-binding protein scr1 (565 aa).

The segment covering 1–19 (MSEATTATTTGKPSRSTKN) has biased composition (polar residues). Residues 1–25 (MSEATTATTTGKPSRSTKNPDAPRP) form a disordered region. 2 C2H2-type zinc fingers span residues 26–48 (YKCPLCTKAFYRLEHQTRHIRTH) and 54–78 (HVCTFPGCAKRFSRSDELTRHARIH). Disordered regions lie at residues 79–119 (TNAN…VHMT), 261–303 (SNAP…STGS), 390–434 (RPVS…DDPS), and 466–565 (ASTP…MTKP). Over residues 80-102 (NANSRRNAAAAAAANNSARSSNS) the composition is skewed to low complexity. 3 stretches are compositionally biased toward polar residues: residues 108-119 (EPSTNNAGVHMT), 276-286 (LPSSSNTSPNH), and 294-303 (GLTSNSSTGS). Over residues 391–413 (PVSPCSTAPSSPTFSTRSFSPTP) the composition is skewed to low complexity. The span at 466-478 (ASTPASGAVSRTP) shows a compositional bias: polar residues. Composition is skewed to low complexity over residues 479–492 (SSVSLSSLSNVNSS), 517–526 (FSSSSRVSVS), and 537–555 (SSSTKSASSSYSTTTPAFS).

Belongs to the creA/MIG C2H2-type zinc-finger protein family.

The protein resides in the nucleus. In terms of biological role, involved in carbon catabolite repression. Represses the transcription of various genes including the inv1 gene. The protein is DNA-binding protein scr1 (scr1) of Schizosaccharomyces pombe (strain 972 / ATCC 24843) (Fission yeast).